The sequence spans 553 residues: Solute carrier family 45 member 3 (553 aa).

11 helical membrane-spanning segments follow: residues 19–39 (LLVN…ITYV), 52–72 (FMTM…PLLG), 88–108 (FIWA…RAGW), 120–140 (LELA…QVCF), 161–181 (FSVY…LPAI), 198–218 (CLFG…LFVT), 275–295 (FVAE…YTDF), 323–343 (MGSL…LVMD), 353–373 (SVYL…CLSH), 382–402 (AALT…LASL), and 522–542 (AYMV…TQVV).

This sequence belongs to the glycoside-pentoside-hexuronide (GPH) cation symporter transporter (TC 2.A.2) family. In terms of tissue distribution, expressed in the epididymis. Primarily expressed in the prostate, but also in other tissues.

Its subcellular location is the membrane. It catalyses the reaction sucrose(out) + H(+)(out) = sucrose(in) + H(+)(in). Functionally, proton-associated sucrose transporter. May be able to transport also glucose and fructose. This Mus musculus (Mouse) protein is Solute carrier family 45 member 3 (Slc45a3).